A 562-amino-acid chain; its full sequence is MKAPLRALICQGIEALRSNGTLPTNTLPPDFVVERPKTRKHGDFATNVAMLLSKATGSNPRLLAQTLVAALPTSADIARIEIAGPGFINFHMHPVAYQHETINVLKQDNDYGRNLSGQSRTVGVEYVSANPTGPLHVGHGRAAAIGDCLARLLEANGWNVKREFYYNDAGVQIDNLVRSVQARARGLKPGDALWPTDAYNGEYIADIAKAYLAGDSINMVDTIITSTKNVDDTAAIHHFAVNYLRNEQNHDLAAFNVDFDIYFLESSLYKDGKVEETVQKLINSGHTYEEGGALWLKSTHFGDDKDRVMRKSDGSYTYFVPDIAYHLSKWQRGYERAITELGADHHGSLARVHAGLQALEIGIPPGWPEYVLHQMVTVMRGGEEVKLSKRSGGYVTLRDLIEETSTDATRWFLIARKPDSQLTFDIDLARQKSNDNPVFYVQYAYARVCSLMHQAHEKNLNYDQTSGMASLDQLSDNTSLCLMIEISRYPEIVQIACELLEPHLIAQYLRELAHAFHTWYHNTPVLVENAVERNAKLTLACATRQVLANGLNLLGVGTPEKM.

The 'HIGH' region motif lies at 129–139 (ANPTGPLHVGH).

The protein belongs to the class-I aminoacyl-tRNA synthetase family. As to quaternary structure, monomer.

The protein localises to the cytoplasm. The enzyme catalyses tRNA(Arg) + L-arginine + ATP = L-arginyl-tRNA(Arg) + AMP + diphosphate. This Xylella fastidiosa (strain M12) protein is Arginine--tRNA ligase.